Here is a 226-residue protein sequence, read N- to C-terminus: Glutathione peroxidase 3 (226 aa).

Positions 1–24 are cleaved as a signal peptide; that stretch reads MARLLQASCLLSLLLAGFLPQSRG. Sec-73 is a catalytic residue. A non-standard amino acid (selenocysteine) is located at residue Sec-73.

This sequence belongs to the glutathione peroxidase family. As to quaternary structure, homotetramer. In terms of tissue distribution, expressed intensively in the kidney and adrenal gland, and weakly in the cerebellum, heart, and lung. Secreted in plasma.

It localises to the secreted. It carries out the reaction 2 glutathione + H2O2 = glutathione disulfide + 2 H2O. The catalysed reaction is tert-butyl hydroperoxide + 2 glutathione = tert-butanol + glutathione disulfide + H2O. Its function is as follows. Protects cells and enzymes from oxidative damage, by catalyzing the reduction of hydrogen peroxide, lipid peroxides and organic hydroperoxide, by glutathione. The chain is Glutathione peroxidase 3 from Macaca fuscata fuscata (Japanese macaque).